The chain runs to 152 residues: Xanthine-guanine phosphoribosyltransferase (152 aa).

5-phospho-alpha-D-ribose 1-diphosphate is bound by residues 37 to 38, arginine 69, and 88 to 96; these read RG and DDLVDTGGT. GMP is bound at residue arginine 69. Aspartate 89 is a binding site for Mg(2+). The guanine site is built by aspartate 92 and isoleucine 135. Residues aspartate 92 and isoleucine 135 each contribute to the xanthine site. GMP is bound by residues 92–96 and 134–135; these read DTGGT and WI.

The protein belongs to the purine/pyrimidine phosphoribosyltransferase family. XGPT subfamily. As to quaternary structure, homotetramer. Mg(2+) is required as a cofactor.

It is found in the cell inner membrane. The catalysed reaction is GMP + diphosphate = guanine + 5-phospho-alpha-D-ribose 1-diphosphate. The enzyme catalyses XMP + diphosphate = xanthine + 5-phospho-alpha-D-ribose 1-diphosphate. It catalyses the reaction IMP + diphosphate = hypoxanthine + 5-phospho-alpha-D-ribose 1-diphosphate. Its pathway is purine metabolism; GMP biosynthesis via salvage pathway; GMP from guanine: step 1/1. The protein operates within purine metabolism; XMP biosynthesis via salvage pathway; XMP from xanthine: step 1/1. Its function is as follows. Purine salvage pathway enzyme that catalyzes the transfer of the ribosyl-5-phosphate group from 5-phospho-alpha-D-ribose 1-diphosphate (PRPP) to the N9 position of the 6-oxopurines guanine and xanthine to form the corresponding ribonucleotides GMP (guanosine 5'-monophosphate) and XMP (xanthosine 5'-monophosphate), with the release of PPi. To a lesser extent, also acts on hypoxanthine. The chain is Xanthine-guanine phosphoribosyltransferase from Escherichia fergusonii (strain ATCC 35469 / DSM 13698 / CCUG 18766 / IAM 14443 / JCM 21226 / LMG 7866 / NBRC 102419 / NCTC 12128 / CDC 0568-73).